Here is a 215-residue protein sequence, read N- to C-terminus: Putative O-methyltransferase MAB_1361c (215 aa).

S-adenosyl-L-methionine contacts are provided by residues Val42, Glu64, 66–67, Ser72, Asp90, and Val91; that span reads GT. Substrate is bound at residue Asp138.

It belongs to the class I-like SAM-binding methyltransferase superfamily. Cation-dependent O-methyltransferase family.

The polypeptide is Putative O-methyltransferase MAB_1361c (Mycobacteroides abscessus (strain ATCC 19977 / DSM 44196 / CCUG 20993 / CIP 104536 / JCM 13569 / NCTC 13031 / TMC 1543 / L948) (Mycobacterium abscessus)).